The primary structure comprises 190 residues: MLGMIRNSLFGSVETWPWQVLSTGGKEDVSYEERACEGGKFATVEVTDKPVDEALREAMPKIMKYVGGTNDKGVGMGMTVPVSFALFPNEDGSLQKKLKVWFRIPNQFQGSPPAPSDESVKIEEREGITVYSTQFGGYAKEADYVAHATQLRTTLEGTPATYQGDVYYCAGYDPPMKPYGRRNEVWLVKA.

The protein belongs to the HEBP family. In terms of assembly, monomer. In terms of tissue distribution, ubiquitously expressed. Extremely abundant in liver.

It localises to the cytoplasm. Its function is as follows. May bind free porphyrinogens that may be present in the cell and thus facilitate removal of these potentially toxic compound. Binds with a high affinity to one molecule of heme or porphyrins. It binds metalloporphyrins, free porphyrins and N-methylprotoporphyrin with similar affinities. The chain is Heme-binding protein 1 (Hebp1) from Mus musculus (Mouse).